A 388-amino-acid chain; its full sequence is Succinate--CoA ligase [ADP-forming] subunit beta (388 aa).

The ATP-grasp domain maps to 9 to 244 (KQLFAEYGLP…PSQDDPREAH (236 aa)). Residues Lys-46, 53-55 (GRG), Glu-99, Thr-102, and Glu-107 contribute to the ATP site. 2 residues coordinate Mg(2+): Asn-199 and Asp-213. Substrate-binding positions include Asn-264 and 321–323 (GIV).

Belongs to the succinate/malate CoA ligase beta subunit family. In terms of assembly, heterotetramer of two alpha and two beta subunits. Mg(2+) is required as a cofactor.

It carries out the reaction succinate + ATP + CoA = succinyl-CoA + ADP + phosphate. The catalysed reaction is GTP + succinate + CoA = succinyl-CoA + GDP + phosphate. The protein operates within carbohydrate metabolism; tricarboxylic acid cycle; succinate from succinyl-CoA (ligase route): step 1/1. Functionally, succinyl-CoA synthetase functions in the citric acid cycle (TCA), coupling the hydrolysis of succinyl-CoA to the synthesis of either ATP or GTP and thus represents the only step of substrate-level phosphorylation in the TCA. The beta subunit provides nucleotide specificity of the enzyme and binds the substrate succinate, while the binding sites for coenzyme A and phosphate are found in the alpha subunit. The protein is Succinate--CoA ligase [ADP-forming] subunit beta of Stutzerimonas stutzeri (strain A1501) (Pseudomonas stutzeri).